A 119-amino-acid polypeptide reads, in one-letter code: MSRVKRGVTAHARHKKVLARAKGFRGQRKSNYRIAHQAVMKALTYEYRDRRTKKRDFRSLWIVRINAAARSEGVTYSRFMNGLLRAGIQLDRKVLADIAVRDKAAFSRLVEVVKGQLAA.

The protein belongs to the bacterial ribosomal protein bL20 family.

In terms of biological role, binds directly to 23S ribosomal RNA and is necessary for the in vitro assembly process of the 50S ribosomal subunit. It is not involved in the protein synthesizing functions of that subunit. The polypeptide is Large ribosomal subunit protein bL20 (Acidithiobacillus ferrooxidans (strain ATCC 23270 / DSM 14882 / CIP 104768 / NCIMB 8455) (Ferrobacillus ferrooxidans (strain ATCC 23270))).